A 448-amino-acid chain; its full sequence is Na(+)-translocating NADH-quinone reductase subunit A (448 aa).

It belongs to the NqrA family. As to quaternary structure, composed of six subunits; NqrA, NqrB, NqrC, NqrD, NqrE and NqrF.

The enzyme catalyses a ubiquinone + n Na(+)(in) + NADH + H(+) = a ubiquinol + n Na(+)(out) + NAD(+). Its function is as follows. NQR complex catalyzes the reduction of ubiquinone-1 to ubiquinol by two successive reactions, coupled with the transport of Na(+) ions from the cytoplasm to the periplasm. NqrA to NqrE are probably involved in the second step, the conversion of ubisemiquinone to ubiquinol. This chain is Na(+)-translocating NADH-quinone reductase subunit A, found in Glaesserella parasuis serovar 5 (strain SH0165) (Haemophilus parasuis).